A 100-amino-acid chain; its full sequence is Pregnancy-associated protein bPAP (100 aa).

A disordered region spans residues 1–40; that stretch reads DSELAGPRGARGPHGLSGPHGLSGLXGPXGYTGPIGMXGL. Low complexity predominate over residues 13–29; it reads PHGLSGPHGLSGLXGPX.

As to expression, detected at high levels in the urine of pregnant females (at protein level) and at far lower levels in the urine of nonpregnant females.

The protein is Pregnancy-associated protein bPAP of Bos taurus (Bovine).